The following is a 203-amino-acid chain: NAD(P)H dehydrogenase (quinone) (203 aa).

Residues 7–194 enclose the Flavodoxin-like domain; that stretch reads VLVLYHSSYG…SLARKQGAHV (188 aa). FMN contacts are provided by residues 13–18 and 82–84; these read SSYGHI and TRF. NAD(+) is bound at residue Y15. Position 102 (W102) interacts with substrate. FMN contacts are provided by residues 117-122 and H137; that span reads STGTGG.

Belongs to the WrbA family. The cofactor is FMN.

The enzyme catalyses a quinone + NADH + H(+) = a quinol + NAD(+). It carries out the reaction a quinone + NADPH + H(+) = a quinol + NADP(+). The polypeptide is NAD(P)H dehydrogenase (quinone) (Parvibaculum lavamentivorans (strain DS-1 / DSM 13023 / NCIMB 13966)).